The following is a 617-amino-acid chain: Electron transfer flavoprotein-ubiquinone oxidoreductase, mitochondrial (617 aa).

A mitochondrion-targeting transit peptide spans 1-33 (MLVPLAKLSCLAYQCFHALKIKKNYLPLCATRW). 71-85 (VVIVGAGPAGLSAAV) lines the FAD pocket. Lys-96 carries the post-translational modification N6-acetyllysine. An intramembrane segment occupies 109 to 130 (IGAHTLSGACLDPGAFKELFPD). N6-acetyllysine occurs at positions 132 and 223. The a ubiquinone site is built by Gly-305 and Gly-306. Lys-357 is subject to N6-acetyllysine. Residues 428–447 (IGLHVTEYEDNLKNSWVWKE) lie within the membrane without spanning it. Residue Ser-551 is modified to Phosphoserine. [4Fe-4S] cluster contacts are provided by Cys-561, Cys-586, Cys-589, and Cys-592. Positions 577–606 (FRLQINAQNCVHCKTCDIKDPSQNINWVVP) constitute a 4Fe-4S ferredoxin-type domain.

This sequence belongs to the ETF-QO/FixC family. Monomer. [4Fe-4S] cluster is required as a cofactor. The cofactor is FAD.

Its subcellular location is the mitochondrion inner membrane. It carries out the reaction a ubiquinone + reduced [electron-transfer flavoprotein] = a ubiquinol + oxidized [electron-transfer flavoprotein] + H(+). Its function is as follows. Accepts electrons from ETF and reduces ubiquinone. This chain is Electron transfer flavoprotein-ubiquinone oxidoreductase, mitochondrial, found in Homo sapiens (Human).